The chain runs to 216 residues: Large ribosomal subunit protein eL15 (216 aa).

Residues R170 to R188 are compositionally biased toward basic residues. The interval R170 to A201 is disordered. Over residues K189 to A201 the composition is skewed to basic and acidic residues.

The protein belongs to the eukaryotic ribosomal protein eL15 family.

This chain is Large ribosomal subunit protein eL15, found in Saccharolobus islandicus (strain M.16.27) (Sulfolobus islandicus).